The chain runs to 459 residues: GTPase Der (459 aa).

2 consecutive EngA-type G domains span residues 3 to 169 and 183 to 358; these read PLVA…PPKE and IRLA…DQFR. Residues 9–16, 56–60, 119–122, 189–196, 236–240, and 301–304 contribute to the GTP site; these read GRPNVGKS, DTGGF, NKLD, DTAGI, and NKWD. The region spanning 359 to 442 is the KH-like domain; that stretch reads FRAPTPQLNR…PIRLIFKGRP (84 aa).

The protein belongs to the TRAFAC class TrmE-Era-EngA-EngB-Septin-like GTPase superfamily. EngA (Der) GTPase family. Associates with the 50S ribosomal subunit.

In terms of biological role, GTPase that plays an essential role in the late steps of ribosome biogenesis. The protein is GTPase Der of Myxococcus xanthus (strain DK1622).